A 156-amino-acid chain; its full sequence is Small ribosomal subunit protein uS7 (156 aa).

This sequence belongs to the universal ribosomal protein uS7 family. In terms of assembly, part of the 30S ribosomal subunit. Contacts proteins S9 and S11.

In terms of biological role, one of the primary rRNA binding proteins, it binds directly to 16S rRNA where it nucleates assembly of the head domain of the 30S subunit. Is located at the subunit interface close to the decoding center, probably blocks exit of the E-site tRNA. The sequence is that of Small ribosomal subunit protein uS7 from Dictyoglomus thermophilum (strain ATCC 35947 / DSM 3960 / H-6-12).